The chain runs to 232 residues: 2,3,4,5-tetrahydropyridine-2,6-dicarboxylate N-acetyltransferase (232 aa).

It belongs to the transferase hexapeptide repeat family. DapH subfamily.

It catalyses the reaction (S)-2,3,4,5-tetrahydrodipicolinate + acetyl-CoA + H2O = L-2-acetamido-6-oxoheptanedioate + CoA. The protein operates within amino-acid biosynthesis; L-lysine biosynthesis via DAP pathway; LL-2,6-diaminopimelate from (S)-tetrahydrodipicolinate (acetylase route): step 1/3. Catalyzes the transfer of an acetyl group from acetyl-CoA to tetrahydrodipicolinate. The protein is 2,3,4,5-tetrahydropyridine-2,6-dicarboxylate N-acetyltransferase of Streptococcus mutans serotype c (strain ATCC 700610 / UA159).